A 328-amino-acid chain; its full sequence is Putative potassium channel protein YugO (328 aa).

The next 3 membrane-spanning stretches (helical) occupy residues 19 to 39, 42 to 62, and 73 to 93; these read IGVI…ILEP, FTSV…VGYG, and AAGI…FATL. Positions 114 to 238 constitute an RCK N-terminal domain; the sequence is RDHIILIGWN…ERAGANQIIG (125 aa).

It localises to the cell membrane. In Bacillus subtilis (strain 168), this protein is Putative potassium channel protein YugO (yugO).